We begin with the raw amino-acid sequence, 329 residues long: DNA-directed RNA polymerase subunit alpha (329 aa).

The alpha N-terminal domain (alpha-NTD) stretch occupies residues Met-1–Arg-235. Residues Phe-249–Asp-329 are alpha C-terminal domain (alpha-CTD).

This sequence belongs to the RNA polymerase alpha chain family. In terms of assembly, homodimer. The RNAP catalytic core consists of 2 alpha, 1 beta, 1 beta' and 1 omega subunit. When a sigma factor is associated with the core the holoenzyme is formed, which can initiate transcription.

The enzyme catalyses RNA(n) + a ribonucleoside 5'-triphosphate = RNA(n+1) + diphosphate. In terms of biological role, DNA-dependent RNA polymerase catalyzes the transcription of DNA into RNA using the four ribonucleoside triphosphates as substrates. In Mannheimia succiniciproducens (strain KCTC 0769BP / MBEL55E), this protein is DNA-directed RNA polymerase subunit alpha.